Reading from the N-terminus, the 1159-residue chain is Reverse gyrase 2 (1159 aa).

Residues 1 to 40 form an RG N-terminal-type zinc finger; sequence MALELIERGCPNCGGVISSDRLEKGLPCSKCLPKPTEEKV. Residues Cys-10, Cys-13, Cys-28, and Cys-31 each contribute to the Zn(2+) site. Residues Gln-82 and 99 to 106 contribute to the ATP site; that span reads APTGVGKT. A Helicase ATP-binding domain is found at 86–275; the sequence is AKRVFMNQSF…LFRNLLGFDV (190 aa). Residues 196-199 carry the DEAD box motif; that stretch reads DDID. The tract at residues 583–1159 is topoisomerase I; sequence DLFKTTLVIV…LLKEEKAFKK (577 aa). A Toprim domain is found at 587 to 743; sequence TTLVIVESPN…NIKRAEFHEV (157 aa). Residues Glu-593 and Asp-712 each contribute to the Mg(2+) site. The Topo IA-type catalytic domain maps to 759–1152; the sequence is DLNLVKAQLV…EVHRIKVLLK (394 aa). Tyr-902 acts as the O-(5'-phospho-DNA)-tyrosine intermediate in catalysis.

It in the N-terminal section; belongs to the DEAD box helicase family. DDVD subfamily. In the C-terminal section; belongs to the type IA topoisomerase family. In terms of assembly, monomer. Zn(2+) is required as a cofactor. Requires Mg(2+) as cofactor.

Its subcellular location is the cytoplasm. It catalyses the reaction ATP + H2O = ADP + phosphate + H(+). In terms of biological role, modifies the topological state of DNA by introducing positive supercoils in an ATP-dependent process, increasing the linking number in steps of +1. Binds to single-stranded DNA, transiently cleaves and then rejoins the ends, introducing a positive supercoil in the process. The scissile phosphodiester is attacked by the catalytic tyrosine of the enzyme, resulting in the formation of a DNA-(5'-phosphotyrosyl)-enzyme intermediate. Probably involved in rewinding DNA strands in regions of the chromosome that have opened up to allow replication, transcription, DNA repair and/or for DNA protection. In Aquifex aeolicus (strain VF5), this protein is Reverse gyrase 2.